A 255-amino-acid polypeptide reads, in one-letter code: Sec-independent protein translocase protein TatC (255 aa).

7 helical membrane-spanning segments follow: residues 28 to 48 (VAAVLLIFAALFYFAQDIYAL), 56 to 76 (YLPEGATMIATGVASPFLAPF), 80 to 100 (LMISLFLAMPVVLHQVWGFIA), 121 to 141 (LFYAGMAFAYFVVFPIMFGFF), 165 to 185 (LFFAFGVAFEVPVATFLLIWV), 195 to 212 (NSRPYVIVGCFVVGMVLT), and 216 to 236 (VFSQTLLAVPMWLLFEIGVFF).

It belongs to the TatC family. As to quaternary structure, the Tat system comprises two distinct complexes: a TatABC complex, containing multiple copies of TatA, TatB and TatC subunits, and a separate TatA complex, containing only TatA subunits. Substrates initially bind to the TatABC complex, which probably triggers association of the separate TatA complex to form the active translocon.

The protein resides in the cell membrane. Its function is as follows. Part of the twin-arginine translocation (Tat) system that transports large folded proteins containing a characteristic twin-arginine motif in their signal peptide across membranes. Together with TatB, TatC is part of a receptor directly interacting with Tat signal peptides. This Azotobacter chroococcum mcd 1 protein is Sec-independent protein translocase protein TatC.